The following is a 637-amino-acid chain: Phosphomethylpyrimidine synthase (637 aa).

Residues Asn-242, Met-271, Tyr-300, His-336, 356–358 (SRG), 397–400 (DGLR), and Glu-436 each bind substrate. His-440 contacts Zn(2+). Residue Tyr-463 participates in substrate binding. Zn(2+) is bound at residue His-504. Residues Cys-584, Cys-587, and Cys-592 each coordinate [4Fe-4S] cluster.

This sequence belongs to the ThiC family. Homodimer. The cofactor is [4Fe-4S] cluster.

The enzyme catalyses 5-amino-1-(5-phospho-beta-D-ribosyl)imidazole + S-adenosyl-L-methionine = 4-amino-2-methyl-5-(phosphooxymethyl)pyrimidine + CO + 5'-deoxyadenosine + formate + L-methionine + 3 H(+). It participates in cofactor biosynthesis; thiamine diphosphate biosynthesis. Functionally, catalyzes the synthesis of the hydroxymethylpyrimidine phosphate (HMP-P) moiety of thiamine from aminoimidazole ribotide (AIR) in a radical S-adenosyl-L-methionine (SAM)-dependent reaction. This chain is Phosphomethylpyrimidine synthase, found in Bordetella pertussis (strain Tohama I / ATCC BAA-589 / NCTC 13251).